Consider the following 295-residue polypeptide: Protein PHR1-LIKE 2 (295 aa).

In terms of domain architecture, HTH myb-type spans 38-98 (TDPKPRLRWT…HLQKFRLGRQ (61 aa)). Positions 69 to 94 (PKTIMRTMGVKGLTLYHLKSHLQKFR) form a DNA-binding region, H-T-H motif. The interval 96 to 138 (GRQAGKESTENSKDASCVGESQDTGSSSTSSMRMAQQEQNEGY) is disordered. Positions 99 to 108 (AGKESTENSK) are enriched in basic and acidic residues. Over residues 127–138 (MRMAQQEQNEGY) the composition is skewed to polar residues. The stretch at 141–161 (TEALRAQMEVQRRLHDQLEVQ) forms a coiled coil. The LHEQLE motif lies at 154–159 (LHDQLE).

Belongs to the MYB-CC family. As to quaternary structure, homo- and heterodimers. Interacts with PHL3, but not with PHR1.

The protein resides in the nucleus. In terms of biological role, transcriptional activator. Acts redundantly with PHR1 as a key component of the central regulatory system controlling transcriptional responses to Pi starvation. Binds in a sequence-specific manner to phosphate starvation-regulated promoters. The sequence is that of Protein PHR1-LIKE 2 from Arabidopsis thaliana (Mouse-ear cress).